We begin with the raw amino-acid sequence, 250 residues long: Triosephosphate isomerase (250 aa).

9 to 11 (NWK) is a binding site for substrate. His94 acts as the Electrophile in catalysis. The active-site Proton acceptor is Glu166. Substrate-binding positions include Gly172, Ser212, and 233–234 (GG).

It belongs to the triosephosphate isomerase family. Homodimer.

It localises to the cytoplasm. The enzyme catalyses D-glyceraldehyde 3-phosphate = dihydroxyacetone phosphate. The protein operates within carbohydrate biosynthesis; gluconeogenesis. It participates in carbohydrate degradation; glycolysis; D-glyceraldehyde 3-phosphate from glycerone phosphate: step 1/1. In terms of biological role, involved in the gluconeogenesis. Catalyzes stereospecifically the conversion of dihydroxyacetone phosphate (DHAP) to D-glyceraldehyde-3-phosphate (G3P). This chain is Triosephosphate isomerase, found in Thermus thermophilus (strain ATCC 27634 / DSM 579 / HB8).